The sequence spans 643 residues: MNANPKFLSADAHVDAAAVAPLPNSRKVYVTGSQPDIRVPMREITQADTPTGFGGEKNPPIYVYDTSGPYTDPDAKIDIRAGLPALRQGWIEARGDTEVLDGLSSQYGLERAADPATADLRFPGLHRNPRRAQPGKNVTQMHYARQGIITPEMEYIAIRENQRRAEYIESLKSSGPNGAKLAAMMGRQHPGQAFGAAAFGANALAEITPEFVRDEVARGRAIIPANINHPESEPMIIGRNFLVKINANIGNSAVTSSIGEEVDKMTWAIRWGGDTVMDLSTGKHIHETREWIIRNSPVPIGTVPIYQALEKVNGKAEDLTWEIFRDTLIEQAEQGVDYFTIHAGVRLQYVPLTANRMTGIVSRGGSIMAKWCLAHHKESFLYEHFEEICEIMKAYDVSFSLGDGLRPGSIYDANDEAQLGELKTLGELTQIAWKHDVQVMIEGPGHVPMQLIKENMDLQLDWCKEAPFYTLGPLTTDIAPGYDHITSGIGAAMIGWFGTAMLCYVTPKEHLGLPNKDDVKEGIITYKLAAHAADLAKGHPGAQVRDNALSKARFEFRWEDQFNIGLDPDKAREFHDETLPKDSAKVAHFCSMCGPHFCSMKITQDVREFAAQQGVSETEALKKGMEVKAVEFVKTGAEIYHRQ.

Substrate is bound by residues Asn248, Met277, Tyr306, His342, 362 to 364 (SRG), 403 to 406 (DGLR), and Glu442. Residue His446 participates in Zn(2+) binding. Tyr469 is a substrate binding site. A Zn(2+)-binding site is contributed by His510. Cys590, Cys593, and Cys598 together coordinate [4Fe-4S] cluster.

This sequence belongs to the ThiC family. In terms of assembly, homodimer. It depends on [4Fe-4S] cluster as a cofactor.

It carries out the reaction 5-amino-1-(5-phospho-beta-D-ribosyl)imidazole + S-adenosyl-L-methionine = 4-amino-2-methyl-5-(phosphooxymethyl)pyrimidine + CO + 5'-deoxyadenosine + formate + L-methionine + 3 H(+). It participates in cofactor biosynthesis; thiamine diphosphate biosynthesis. Its function is as follows. Catalyzes the synthesis of the hydroxymethylpyrimidine phosphate (HMP-P) moiety of thiamine from aminoimidazole ribotide (AIR) in a radical S-adenosyl-L-methionine (SAM)-dependent reaction. This is Phosphomethylpyrimidine synthase from Burkholderia ambifaria (strain MC40-6).